The following is a 1271-amino-acid chain: ATP-dependent helicase/nuclease subunit A (1271 aa).

In terms of domain architecture, UvrD-like helicase ATP-binding spans 3 to 476; the sequence is TKWTEEQELA…IMLYKNFRSR (474 aa). 24-31 provides a ligand contact to ATP; it reads AAAGSGKT. Positions 528–824 constitute a UvrD-like helicase C-terminal domain; that stretch reads IENLKVAGDI…RIMSIHKSKG (297 aa).

The protein belongs to the helicase family. AddA subfamily. In terms of assembly, heterodimer of AddA and AddB/RexB. Mg(2+) is required as a cofactor.

The enzyme catalyses Couples ATP hydrolysis with the unwinding of duplex DNA by translocating in the 3'-5' direction.. The catalysed reaction is ATP + H2O = ADP + phosphate + H(+). Functionally, the heterodimer acts as both an ATP-dependent DNA helicase and an ATP-dependent, dual-direction single-stranded exonuclease. Recognizes the chi site generating a DNA molecule suitable for the initiation of homologous recombination. The AddA nuclease domain is required for chi fragment generation; this subunit has the helicase and 3' -&gt; 5' nuclease activities. This Clostridium perfringens (strain ATCC 13124 / DSM 756 / JCM 1290 / NCIMB 6125 / NCTC 8237 / Type A) protein is ATP-dependent helicase/nuclease subunit A.